Here is a 97-residue protein sequence, read N- to C-terminus: Co-chaperonin GroES (97 aa).

It belongs to the GroES chaperonin family. Heptamer of 7 subunits arranged in a ring. Interacts with the chaperonin GroEL.

It localises to the cytoplasm. In terms of biological role, together with the chaperonin GroEL, plays an essential role in assisting protein folding. The GroEL-GroES system forms a nano-cage that allows encapsulation of the non-native substrate proteins and provides a physical environment optimized to promote and accelerate protein folding. GroES binds to the apical surface of the GroEL ring, thereby capping the opening of the GroEL channel. The polypeptide is Co-chaperonin GroES (Stutzerimonas stutzeri (strain A1501) (Pseudomonas stutzeri)).